A 555-amino-acid chain; its full sequence is Connector enhancer of kinase suppressor of ras 3 (555 aa).

The 66-residue stretch at 7 to 72 folds into the SAM domain; the sequence is WSPKQVVDWT…LEAVDLLCAL (66 aa). The 95-residue stretch at 80 to 174 folds into the CRIC domain; that stretch reads TMKNLVLKLR…TAVQKDCLIA (95 aa). Residues 211–293 enclose the PDZ domain; sequence EVHLPNVRPG…GVVLLLKKRP (83 aa). Disordered stretches follow at residues 308 to 333, 362 to 389, and 518 to 538; these read RWKP…MDAS, SFGY…SFLD, and PFQE…ASSG. Positions 311–329 are enriched in low complexity; sequence PPLVQTSPPPTTTQSPEST. The 222-residue stretch at 325-546 folds into the DUF1170 domain; that stretch reads SPESTMDASL…SGEPSLLVSW (222 aa). 2 positions are modified to phosphoserine: serine 381 and serine 383.

Belongs to the CNKSR family. Interacts with epithelial sodium channel ENaC. Interacts directly with SCNN1A (ENaC subunit alpha) and SCNN1B (ENaC subunit beta) C-terminal tails. Interacts with ENaC regulatory proteins NEDD4L, RAF1 and SGK1. In terms of tissue distribution, expressed in kidney.

It localises to the cytoplasm. Its subcellular location is the apical cell membrane. Involved in transepithelial sodium transport. Regulates aldosterone-induced and epithelial sodium channel (ENaC)-mediated sodium transport through regulation of ENaC cell surface expression. Acts as a scaffold protein coordinating the assembly of an ENaC-regulatory complex (ERC). The chain is Connector enhancer of kinase suppressor of ras 3 (Cnksr3) from Mus musculus (Mouse).